The chain runs to 227 residues: MAYPMQLGLQDATSPIMEELTDFHDHTLMIVFLISTLVLYIISLMLTTKLTHTNTMDAQEVETVWTILPAIILIMIALPSLRILYMMDEINDPYLTVKTMGHQWYWSYEYTDYEDLMFDSYMIATSDLKPGGLRLLEVDNRVVLPMELPVRMLVSSEDVLHSWAVPSLGLKTDAIPGRLNQATLISSRPGLYYGQCSEICGANHSFMPIVLEMVPLKQFESWTSSMT.

The Mitochondrial intermembrane portion of the chain corresponds to 1-14 (MAYPMQLGLQDATS). The helical transmembrane segment at 15-45 (PIMEELTDFHDHTLMIVFLISTLVLYIISLM) threads the bilayer. The Mitochondrial matrix segment spans residues 46-59 (LTTKLTHTNTMDAQ). Residues 60–87 (EVETVWTILPAIILIMIALPSLRILYMM) form a helical membrane-spanning segment. The Mitochondrial intermembrane portion of the chain corresponds to 88 to 227 (DEINDPYLTV…QFESWTSSMT (140 aa)). Positions 161, 196, 198, 200, 204, and 207 each coordinate Cu cation. E198 lines the Mg(2+) pocket.

It belongs to the cytochrome c oxidase subunit 2 family. As to quaternary structure, component of the cytochrome c oxidase (complex IV, CIV), a multisubunit enzyme composed of 14 subunits. The complex is composed of a catalytic core of 3 subunits MT-CO1, MT-CO2 and MT-CO3, encoded in the mitochondrial DNA, and 11 supernumerary subunits COX4I, COX5A, COX5B, COX6A, COX6B, COX6C, COX7A, COX7B, COX7C, COX8 and NDUFA4, which are encoded in the nuclear genome. The complex exists as a monomer or a dimer and forms supercomplexes (SCs) in the inner mitochondrial membrane with NADH-ubiquinone oxidoreductase (complex I, CI) and ubiquinol-cytochrome c oxidoreductase (cytochrome b-c1 complex, complex III, CIII), resulting in different assemblies (supercomplex SCI(1)III(2)IV(1) and megacomplex MCI(2)III(2)IV(2)). Found in a complex with TMEM177, COA6, COX18, COX20, SCO1 and SCO2. Interacts with TMEM177 in a COX20-dependent manner. Interacts with COX20. Interacts with COX16. Requires Cu cation as cofactor.

It is found in the mitochondrion inner membrane. The enzyme catalyses 4 Fe(II)-[cytochrome c] + O2 + 8 H(+)(in) = 4 Fe(III)-[cytochrome c] + 2 H2O + 4 H(+)(out). Functionally, component of the cytochrome c oxidase, the last enzyme in the mitochondrial electron transport chain which drives oxidative phosphorylation. The respiratory chain contains 3 multisubunit complexes succinate dehydrogenase (complex II, CII), ubiquinol-cytochrome c oxidoreductase (cytochrome b-c1 complex, complex III, CIII) and cytochrome c oxidase (complex IV, CIV), that cooperate to transfer electrons derived from NADH and succinate to molecular oxygen, creating an electrochemical gradient over the inner membrane that drives transmembrane transport and the ATP synthase. Cytochrome c oxidase is the component of the respiratory chain that catalyzes the reduction of oxygen to water. Electrons originating from reduced cytochrome c in the intermembrane space (IMS) are transferred via the dinuclear copper A center (CU(A)) of subunit 2 and heme A of subunit 1 to the active site in subunit 1, a binuclear center (BNC) formed by heme A3 and copper B (CU(B)). The BNC reduces molecular oxygen to 2 water molecules using 4 electrons from cytochrome c in the IMS and 4 protons from the mitochondrial matrix. In Cratogeomys castanops (Yellow-faced pocket gopher), this protein is Cytochrome c oxidase subunit 2 (MT-CO2).